A 2566-amino-acid polypeptide reads, in one-letter code: Zinc finger protein GLI1 (2566 aa).

3 disordered regions span residues 349–375 (HHSSGYVPNHTAPMLRGGKKRSHSQSS), 430–508 (DIRR…RSTG), and 985–1046 (KSIE…GDPD). Composition is skewed to polar residues over residues 434 to 444 (TLSSNGNSSHT) and 457 to 492 (WSPNSPHSSGSGFDNYQTSSHKSLPLPSTLQTYQQH). The span at 493–508 (SGYTSTSGSSGNRSTG) shows a compositional bias: low complexity. Residues 993–1016 (WQNQNVFSSRRNSTRDPSNNNNSG) show a composition bias toward polar residues. Residues 1023–1035 (DEPDVDDDEELDD) are compositionally biased toward acidic residues. The C2H2-type 1; degenerate zinc finger occupies 1088–1110 (RECVRGTRPFKAQYMLVVHMRRH). 3 C2H2-type zinc fingers span residues 1116 to 1140 (HKCIFEGCIKRYSRLENLKTHLRSH), 1146 to 1171 (YQCEIPGCNKAFSNASDRAKHQNRTH), and 1177 to 1202 (YTCKVDGCSKRYTDPSSLRKHVKTVH). Disordered stretches follow at residues 1254–1313 (GNSN…PRDS), 1465–1491 (LSTTSNPVQSLSPSIDNPINSTGTKQK), 1650–1677 (SKNMDNNSQTKNNNELNEENSPQSNQNE), 1727–1791 (AAAS…MDND), and 2067–2091 (MHFSPHSYVHSSSSNSSPFNSNRPH). Low complexity-rich tracts occupy residues 1661–1677 (NNNELNEENSPQSNQNE) and 1727–1743 (AAASSGIGSGVTTTTAS). Positions 1752–1769 (NHHHQKQQPKHSHQHQNR) are enriched in basic residues. A compositionally biased stretch (polar residues) spans 1770-1791 (TKSINSDNNYSNQDNVSTMDND). Residues 2070–2090 (SPHSYVHSSSSNSSPFNSNRP) are compositionally biased toward low complexity.

This sequence belongs to the GLI C2H2-type zinc-finger protein family. In terms of tissue distribution, expressed in female-paired or unpaired males along the ventral surface in neurons and skin tegument cells. In virgin and mature females, expressed bilaterally along the edges of the body in neurons. In mature females, also expressed in skin tegument cells.

It localises to the nucleus. Its function is as follows. Probable transcription factor which plays an essential role in males to trigger female sexual development by inducing NRPS expression in male. NRPS produces the pheromone beta-alanyl-tryptamine (BATT), which stimulates female sexual development. The polypeptide is Zinc finger protein GLI1 (Schistosoma mansoni (Blood fluke)).